Here is a 539-residue protein sequence, read N- to C-terminus: uncharacterized protein (539 aa).

5 helical membrane-spanning segments follow: residues 4–22 (LVENQLLALVVIMTVGLLL), 27–46 (IFGFRLGVAAVLFVGLALST), 56–78 (LIYVVGLSLFVYTIGLEAGPGFF), 90–112 (ALTLGAIIATTALAWALITVLNI), and 155–177 (PVVAYSLAYPLGVLIVILSIAIF). 2 RCK C-terminal domains span residues 187–269 (KEAE…AIGE) and 271–352 (IDGD…LLGD). The next 4 membrane-spanning stretches (helical) occupy residues 360–382 (FNLLPLAAGLMIGVLVGMVEFPL), 422–444 (LALRQLGITLFLAAIGTSAGAGF), 453–475 (SLTIIGFGALLTLFISITVLFVG), and 516–538 (YTSVYPLAMIAKILAAQTLLFLL).

The protein belongs to the AAE transporter (TC 2.A.81) family.

The protein localises to the cell membrane. This is an uncharacterized protein from Corynebacterium glutamicum (strain ATCC 13032 / DSM 20300 / JCM 1318 / BCRC 11384 / CCUG 27702 / LMG 3730 / NBRC 12168 / NCIMB 10025 / NRRL B-2784 / 534).